Consider the following 404-residue polypeptide: MEDLVCVGITHKEAEVEELEKARFESDEAVRDIVESFGLSGCVLLQTCNRVEVYASGARDRAEELGDLIHDDAWVKRGSEAVRHLFRVACGLESMMVGEQEILRQVKKAYDRAARLGTLDEALKIVFRRAINLGKRAREETRISEGAVSIGSAAVELAERELGSLHDKTVLVVGAGEMGKTVAKSLVDRGVRAVLVANRTYERAVELARDLGGEAVRFDELVDHLARSDVVVSATAAPHPVIHVDDVREALRKRDRRSPILIIDIANPRDVEEGVENIEDVEVRTIDDLRVIARENLERRRKEIPKVEKLIEEELSTVEEELEKLKERRLVADVAKSLHEIKDRELERALRRLKTGDPENVLQDFAEAYTKRLINVLTSAIMELPDEYRRAACRALRRASELNG.

Residues 47 to 50, Ser-94, 99 to 101, and Gln-105 contribute to the substrate site; these read TCNR and EQE. Cys-48 (nucleophile) is an active-site residue. 174 to 179 is a binding site for NADP(+); the sequence is GAGEMG.

Homotetramer.

The enzyme catalyses (S)-4-amino-5-oxopentanoate + tRNA(Glu) + NADP(+) = L-glutamyl-tRNA(Glu) + NADPH + H(+). Its pathway is porphyrin-containing compound metabolism; protoporphyrin-IX biosynthesis; 5-aminolevulinate from L-glutamyl-tRNA(Glu): step 1/2. Inhibited by heavy metal compounds, Zn(2+), and heme. Also competitively inhibited by glutamycin. Catalyzes the NADPH-dependent reduction of glutamyl-tRNA(Glu) to glutamate 1-semialdehyde (GSA). In the absence of NADPH, exhibits substrate esterase activity, leading to the release of glutamate from tRNA. The chain is Glutamyl-tRNA reductase (hemA) from Methanopyrus kandleri (strain AV19 / DSM 6324 / JCM 9639 / NBRC 100938).